We begin with the raw amino-acid sequence, 333 residues long: Protein amalgam (333 aa).

Positions 1-23 are cleaved as a signal peptide; the sequence is MARLRLLIGLIFCLAISLDSVLS. The Ig-like V-type domain occupies 25-128; it reads PVISQISKDV…VLVSATEKVT (104 aa). Residues Asn-45 and Asn-86 are each glycosylated (N-linked (GlcNAc...) asparagine). 3 disulfide bridges follow: Cys-46-Cys-117, Cys-161-Cys-208, and Cys-251-Cys-307. Ig-like C2-type domains follow at residues 139–223 and 230–323; these read PVIA…RLIR and PQIA…LHLF. Asn-308 carries an N-linked (GlcNAc...) asparagine glycan.

Its subcellular location is the cell membrane. This chain is Protein amalgam (Ama), found in Drosophila melanogaster (Fruit fly).